A 199-amino-acid chain; its full sequence is Pyridoxal 5'-phosphate synthase subunit PdxT (199 aa).

52 to 54 provides a ligand contact to L-glutamine; sequence GES. The Nucleophile role is filled by C84. Residues R115 and 143-144 contribute to the L-glutamine site; that span reads IR. Residues H179 and E181 each act as charge relay system in the active site.

It belongs to the glutaminase PdxT/SNO family. As to quaternary structure, in the presence of PdxS, forms a dodecamer of heterodimers. Only shows activity in the heterodimer.

It carries out the reaction aldehydo-D-ribose 5-phosphate + D-glyceraldehyde 3-phosphate + L-glutamine = pyridoxal 5'-phosphate + L-glutamate + phosphate + 3 H2O + H(+). The catalysed reaction is L-glutamine + H2O = L-glutamate + NH4(+). The protein operates within cofactor biosynthesis; pyridoxal 5'-phosphate biosynthesis. Functionally, catalyzes the hydrolysis of glutamine to glutamate and ammonia as part of the biosynthesis of pyridoxal 5'-phosphate. The resulting ammonia molecule is channeled to the active site of PdxS. This Methanosarcina mazei (strain ATCC BAA-159 / DSM 3647 / Goe1 / Go1 / JCM 11833 / OCM 88) (Methanosarcina frisia) protein is Pyridoxal 5'-phosphate synthase subunit PdxT.